The chain runs to 110 residues: Nucleoid-associated protein Mvan_5528 (110 aa).

This sequence belongs to the YbaB/EbfC family. As to quaternary structure, homodimer.

The protein localises to the cytoplasm. The protein resides in the nucleoid. Functionally, binds to DNA and alters its conformation. May be involved in regulation of gene expression, nucleoid organization and DNA protection. The sequence is that of Nucleoid-associated protein Mvan_5528 from Mycolicibacterium vanbaalenii (strain DSM 7251 / JCM 13017 / BCRC 16820 / KCTC 9966 / NRRL B-24157 / PYR-1) (Mycobacterium vanbaalenii).